A 488-amino-acid polypeptide reads, in one-letter code: Annexin A7 (488 aa).

The segment covering Met1–Pro18 has biased composition (pro residues). Disordered stretches follow at residues Met1–Val49 and Gly71–Pro143. Residues Met1 to Pro143 are repeat-rich region. Residues Gly5–Ala20 are 3 X 5 AA tandem repeats of G-Y-P-P-X. The span at Pro89–Phe102 shows a compositional bias: gly residues. Annexin repeat units follow at residues Phe185–Met256, Pro257–Gln328, Gln340–Gln412, and Asn416–Gly487. Lys233 is subject to N6-acetyllysine.

Belongs to the annexin family. As to quaternary structure, interacts with PDCD6. Isoform 1 is expressed in brain, heart and skeletal muscle. Isoform 2 is more abundant in liver, lung, kidney, spleen, fibroblasts and placenta.

In terms of biological role, calcium/phospholipid-binding protein which promotes membrane fusion and is involved in exocytosis. The polypeptide is Annexin A7 (ANXA7) (Homo sapiens (Human)).